A 394-amino-acid chain; its full sequence is Probable fimbrial assembly protein FimD, serogroup H1 (394 aa).

In Dichelobacter nodosus (Bacteroides nodosus), this protein is Probable fimbrial assembly protein FimD, serogroup H1 (fimD).